The chain runs to 798 residues: Cold shock domain-containing protein E1 (798 aa).

Positions 26 to 87 (ETGVIEKLLT…RTGKPIAIKL (62 aa)) constitute a CSD 1 domain. Lys81 bears the N6-acetyllysine mark. Lys91 is covalently cross-linked (Glycyl lysine isopeptide (Lys-Gly) (interchain with G-Cter in SUMO2)). Residue Ser123 is modified to Phosphoserine. The region spanning 136–179 (VFYLTYTSEDVEGNVQLETGDKINFVIDNNKHTGAVSARNIMLL) is the CSD 2; truncated domain. In terms of domain architecture, CSD 3 spans 186-245 (CQGVVCAMKEAFGFIERGDVVKEIFFHYSEFKGDLETLQPGDDVEFTIKDRNGKEVATDV). Ser276 carries the post-translational modification Phosphoserine. The CSD 4; truncated domain maps to 297–337 (LPFGDKDTKSKVTLLEGDHVRFNISTDRRDKLERATNIEVL). CSD domains are found at residues 349-410 (EMGV…AIRI) and 447-507 (NKGK…ATCV). Phosphoserine is present on Ser514. The CSD 7 domain maps to 519-579 (LLGYVATLKD…KGNKVSAEKV (61 aa)). Phosphoserine is present on Ser584. CSD domains are found at residues 610-670 (PTQI…AYNI) and 674-735 (RRAT…ACNV). Positions 748-789 (PRPDRLVNRLKNITLDDASAPRLMVLRQPRGPDNSMGFGAER) constitute an SUZ-C domain. At Thr761 the chain carries Phosphothreonine.

This sequence belongs to the UNR family. In terms of assembly, component of a multi subunit autoregulatory ribonucleoprotein complex (ARC), at least composed of IGF2BP1, PABPC1 and CSDE1. Interacts with STRAP. Part of a complex associated with the FOS mCRD domain and consisting of PABPC1, PAIP1, HNRPD and SYNCRIP. The interaction with PABPC1 is direct and RNA-independent. Interacts with EIF4ENIF1/4E-T.

Its subcellular location is the cytoplasm. The protein localises to the stress granule. It localises to the P-body. Functionally, RNA-binding protein involved in translationally coupled mRNA turnover. Implicated with other RNA-binding proteins in the cytoplasmic deadenylation/translational and decay interplay of the FOS mRNA mediated by the major coding-region determinant of instability (mCRD) domain. Required for efficient formation of stress granules. This chain is Cold shock domain-containing protein E1, found in Mus musculus (Mouse).